Reading from the N-terminus, the 183-residue chain is Large ribosomal subunit protein uL5 (183 aa).

Belongs to the universal ribosomal protein uL5 family. As to quaternary structure, part of the 50S ribosomal subunit; contacts the 5S rRNA and probably tRNA. Forms a bridge to the 30S subunit in the 70S ribosome.

This is one of the proteins that bind and probably mediate the attachment of the 5S RNA into the large ribosomal subunit, where it forms part of the central protuberance. In the 70S ribosome it contacts protein S13 of the 30S subunit (bridge B1b), connecting the 2 subunits; this bridge is implicated in subunit movement. May contact the P site tRNA; the 5S rRNA and some of its associated proteins might help stabilize positioning of ribosome-bound tRNAs. The protein is Large ribosomal subunit protein uL5 of Thermococcus kodakarensis (strain ATCC BAA-918 / JCM 12380 / KOD1) (Pyrococcus kodakaraensis (strain KOD1)).